A 431-amino-acid chain; its full sequence is Serine--tRNA ligase (431 aa).

237-239 (TAE) contacts L-serine. Residue 268–270 (RSE) participates in ATP binding. Glu-291 contributes to the L-serine binding site. 355 to 358 (EISS) provides a ligand contact to ATP. Ser-390 contributes to the L-serine binding site.

It belongs to the class-II aminoacyl-tRNA synthetase family. Type-1 seryl-tRNA synthetase subfamily. As to quaternary structure, homodimer. The tRNA molecule binds across the dimer.

The protein resides in the cytoplasm. It catalyses the reaction tRNA(Ser) + L-serine + ATP = L-seryl-tRNA(Ser) + AMP + diphosphate + H(+). The enzyme catalyses tRNA(Sec) + L-serine + ATP = L-seryl-tRNA(Sec) + AMP + diphosphate + H(+). It participates in aminoacyl-tRNA biosynthesis; selenocysteinyl-tRNA(Sec) biosynthesis; L-seryl-tRNA(Sec) from L-serine and tRNA(Sec): step 1/1. Its function is as follows. Catalyzes the attachment of serine to tRNA(Ser). Is also able to aminoacylate tRNA(Sec) with serine, to form the misacylated tRNA L-seryl-tRNA(Sec), which will be further converted into selenocysteinyl-tRNA(Sec). The chain is Serine--tRNA ligase from Neisseria meningitidis serogroup B (strain ATCC BAA-335 / MC58).